A 142-amino-acid polypeptide reads, in one-letter code: Large ribosomal subunit protein uL11 (142 aa).

The protein belongs to the universal ribosomal protein uL11 family. In terms of assembly, part of the ribosomal stalk of the 50S ribosomal subunit. Interacts with L10 and the large rRNA to form the base of the stalk. L10 forms an elongated spine to which L12 dimers bind in a sequential fashion forming a multimeric L10(L12)X complex. Post-translationally, one or more lysine residues are methylated.

Its function is as follows. Forms part of the ribosomal stalk which helps the ribosome interact with GTP-bound translation factors. The polypeptide is Large ribosomal subunit protein uL11 (Pelotomaculum thermopropionicum (strain DSM 13744 / JCM 10971 / SI)).